We begin with the raw amino-acid sequence, 519 residues long: Transmembrane protein 180 (519 aa).

Over 1–11 (MGLDWPQAWLL) the chain is Extracellular. A helical transmembrane segment spans residues 12 to 43 (GLPIAVVYGSLALFTSILHNVFLLYYVDTFVS). Residues 44–55 (VYKINKVSFWVG) lie on the Cytoplasmic side of the membrane. The helical transmembrane segment at 56–74 (ETVFLLWNSFNDPLFGWLS) threads the bilayer. Residues 75-100 (DRQLLSSQPRSGAGLSSRDVVLTRVR) are Extracellular-facing. The helical transmembrane segment at 101–118 (ALGWHGPLLALSFLAFWV) threads the bilayer. Over 119 to 126 (PWAPAGLQ) the chain is Cytoplasmic. Residues 127 to 151 (FLLCLCLYDGFLTLVDLHHHALLAD) traverse the membrane as a helical segment. The Extracellular segment spans residues 152-155 (LALS). Residues 156–179 (SHDRTHLNFYCSLFSAAGSLSVFA) traverse the membrane as a helical segment. Topologically, residues 180-191 (SYAFWNKEDFSS) are cytoplasmic. A helical transmembrane segment spans residues 192 to 223 (FRAFCVVLAAGSGLGFLGTTQLLKRQIEATRR). Residues 224–264 (DRGCPGLDLDGGVCEEEPPVGGEEAGNITLGQYLRQLARHQ) lie on the Extracellular side of the membrane. An N-linked (GlcNAc...) asparagine glycan is attached at Asn250. Residues 265 to 292 (NFLWFVGMDLVQVFHCHFNSNFFPLFLE) form a helical membrane-spanning segment. At 293 to 305 (HLLSDHISLSTGS) the chain is on the cytoplasmic side. A helical transmembrane segment spans residues 306–325 (FLLGISYVAPHLNNLYFLPL). Topologically, residues 326–330 (CRRWG) are extracellular. Residues 331 to 350 (VYAVVRGLFLLKLSLSLLML) form a helical membrane-spanning segment. Topologically, residues 351–358 (LAGPDHPG) are cytoplasmic. A helical membrane pass occupies residues 359–393 (LLCFFIASNRVFTEGTCKLLTLVVTDLVDEDLVLN). Residues 394–402 (HRKQAASAL) lie on the Extracellular side of the membrane. Residues 403 to 429 (LFGMVALVTKPGQTFAPLLGTWLLCFY) form a helical membrane-spanning segment. Topologically, residues 430–468 (TGHDLFQQSPMTPVGSVRPWPELPAPAPAPAQAPTLRQG) are cytoplasmic. Residues 469–487 (CFYLLVFVPITCALLQLFT) form a helical membrane-spanning segment. Residues 488–519 (WSQFTLHGRRLRTVKAQRQNLAQIHTLNIKMV) lie on the Extracellular side of the membrane.

It localises to the cell membrane. The sequence is that of Transmembrane protein 180 from Mus musculus (Mouse).